Here is a 183-residue protein sequence, read N- to C-terminus: Nucleoside triphosphate pyrophosphatase (183 aa).

The active-site Proton acceptor is the Asp-71.

This sequence belongs to the Maf family. Requires a divalent metal cation as cofactor.

It localises to the cytoplasm. The catalysed reaction is a ribonucleoside 5'-triphosphate + H2O = a ribonucleoside 5'-phosphate + diphosphate + H(+). The enzyme catalyses a 2'-deoxyribonucleoside 5'-triphosphate + H2O = a 2'-deoxyribonucleoside 5'-phosphate + diphosphate + H(+). Nucleoside triphosphate pyrophosphatase. May have a dual role in cell division arrest and in preventing the incorporation of modified nucleotides into cellular nucleic acids. The polypeptide is Nucleoside triphosphate pyrophosphatase (Campylobacter jejuni subsp. jejuni serotype O:6 (strain 81116 / NCTC 11828)).